A 647-amino-acid polypeptide reads, in one-letter code: Knirps-related protein (647 aa).

The nuclear receptor DNA-binding region spans 11–87; it reads NQTCKVCGEP…VGMSKSGSRY (77 aa). 2 consecutive NR C4-type zinc fingers follow at residues 14 to 34 and 51 to 75; these read CKVC…CEGC and CKNN…LKKC. Disordered regions lie at residues 111 to 142, 196 to 274, 340 to 383, and 402 to 600; these read MAAH…KGMS, HKHP…LSPF, GAGQ…LLTN, and SQQQ…NSIL. The span at 120-134 shows a compositional bias: gly residues; that stretch reads AGGGSSGGSGGGQGM. 2 stretches are compositionally biased toward low complexity: residues 200–223 and 232–247; these read VVAS…VSSV and GGKS…ADGS. Residues 248–260 are compositionally biased toward gly residues; sequence HSGGGGGGGGGVT. Composition is skewed to polar residues over residues 370-381 and 420-432; these read SPSTHANNNHLL and DYSI…PNSE. Composition is skewed to basic and acidic residues over residues 433–443 and 480–491; these read SGRERVKSRQN and QEERTPAGEDPR. Over residues 502–519 the composition is skewed to low complexity; it reads LSMKTTGSSLSSKSSSPE. Residues 520–541 are compositionally biased toward acidic residues; the sequence is IEPETEISSDVEKNDTDDDDED. The span at 542–556 shows a compositional bias: basic and acidic residues; sequence LKVTPEEEISVRETA. The span at 567 to 579 shows a compositional bias: polar residues; that stretch reads TTETAKTSIENTH. The segment covering 580–599 has biased composition (low complexity); it reads NNNNSISNNNNNNNNNNNSI.

Belongs to the nuclear hormone receptor family. NR0 subfamily.

The protein resides in the nucleus. The chain is Knirps-related protein (knrl) from Drosophila melanogaster (Fruit fly).